A 101-amino-acid chain; its full sequence is NAD(P)H-quinone oxidoreductase subunit 4L, chloroplastic (101 aa).

3 consecutive transmembrane segments (helical) span residues 2 to 22, 32 to 52, and 61 to 81; these read MLEY…YGLI, MCLE…SDLF, and IFSI…PAIV.

The protein belongs to the complex I subunit 4L family. In terms of assembly, NDH is composed of at least 16 different subunits, 5 of which are encoded in the nucleus.

The protein resides in the plastid. The protein localises to the chloroplast thylakoid membrane. The catalysed reaction is a plastoquinone + NADH + (n+1) H(+)(in) = a plastoquinol + NAD(+) + n H(+)(out). It catalyses the reaction a plastoquinone + NADPH + (n+1) H(+)(in) = a plastoquinol + NADP(+) + n H(+)(out). In terms of biological role, NDH shuttles electrons from NAD(P)H:plastoquinone, via FMN and iron-sulfur (Fe-S) centers, to quinones in the photosynthetic chain and possibly in a chloroplast respiratory chain. The immediate electron acceptor for the enzyme in this species is believed to be plastoquinone. Couples the redox reaction to proton translocation, and thus conserves the redox energy in a proton gradient. The polypeptide is NAD(P)H-quinone oxidoreductase subunit 4L, chloroplastic (Acorus calamus var. americanus (American sweet flag)).